The sequence spans 171 residues: Protein-export protein SecB (171 aa).

Belongs to the SecB family. As to quaternary structure, homotetramer, a dimer of dimers. One homotetramer interacts with 1 SecA dimer.

Its subcellular location is the cytoplasm. In terms of biological role, one of the proteins required for the normal export of preproteins out of the cell cytoplasm. It is a molecular chaperone that binds to a subset of precursor proteins, maintaining them in a translocation-competent state. It also specifically binds to its receptor SecA. This chain is Protein-export protein SecB, found in Histophilus somni (strain 129Pt) (Haemophilus somnus).